Consider the following 196-residue polypeptide: Small ribosomal subunit protein uS4c (196 aa).

Positions 89–150 constitute an S4 RNA-binding domain; that stretch reads MRLDNIVFRL…NQRSKRLVQN (62 aa).

This sequence belongs to the universal ribosomal protein uS4 family. As to quaternary structure, part of the 30S ribosomal subunit. Contacts protein S5. The interaction surface between S4 and S5 is involved in control of translational fidelity.

It localises to the plastid. It is found in the chloroplast. One of the primary rRNA binding proteins, it binds directly to 16S rRNA where it nucleates assembly of the body of the 30S subunit. Functionally, with S5 and S12 plays an important role in translational accuracy. The chain is Small ribosomal subunit protein uS4c (rps4) from Eleusine indica (Goosegrass).